The following is a 204-amino-acid chain: Holliday junction branch migration complex subunit RuvA (204 aa).

The segment at 1 to 64 (MISRMKGIIL…EDAQLLYGFH (64 aa)) is domain I. The domain II stretch occupies residues 65–143 (HPKERAMFSE…NLNKNLFKST (79 aa)). The interval 144 to 155 (ADHMLSSVSTDL) is flexible linker. A domain III region spans residues 156 to 204 (SAKSAEAEAISALISLGYKPQEAAQLIKNIAQPDLDSQALIKHALRSTL).

Belongs to the RuvA family. Homotetramer. Forms an RuvA(8)-RuvB(12)-Holliday junction (HJ) complex. HJ DNA is sandwiched between 2 RuvA tetramers; dsDNA enters through RuvA and exits via RuvB. An RuvB hexamer assembles on each DNA strand where it exits the tetramer. Each RuvB hexamer is contacted by two RuvA subunits (via domain III) on 2 adjacent RuvB subunits; this complex drives branch migration. In the full resolvosome a probable DNA-RuvA(4)-RuvB(12)-RuvC(2) complex forms which resolves the HJ.

The protein resides in the cytoplasm. Its function is as follows. The RuvA-RuvB-RuvC complex processes Holliday junction (HJ) DNA during genetic recombination and DNA repair, while the RuvA-RuvB complex plays an important role in the rescue of blocked DNA replication forks via replication fork reversal (RFR). RuvA specifically binds to HJ cruciform DNA, conferring on it an open structure. The RuvB hexamer acts as an ATP-dependent pump, pulling dsDNA into and through the RuvAB complex. HJ branch migration allows RuvC to scan DNA until it finds its consensus sequence, where it cleaves and resolves the cruciform DNA. This chain is Holliday junction branch migration complex subunit RuvA, found in Hamiltonella defensa subsp. Acyrthosiphon pisum (strain 5AT).